Reading from the N-terminus, the 130-residue chain is Glycine cleavage system H protein (130 aa).

The Lipoyl-binding domain occupies 24–106; sequence IYSVGITEHA…YTDGWLFRIK (83 aa). Lys65 bears the N6-lipoyllysine mark.

It belongs to the GcvH family. The glycine cleavage system is composed of four proteins: P, T, L and H. The cofactor is (R)-lipoate.

In terms of biological role, the glycine cleavage system catalyzes the degradation of glycine. The H protein shuttles the methylamine group of glycine from the P protein to the T protein. This chain is Glycine cleavage system H protein, found in Pectobacterium atrosepticum (strain SCRI 1043 / ATCC BAA-672) (Erwinia carotovora subsp. atroseptica).